We begin with the raw amino-acid sequence, 331 residues long: Lipoyl synthase (331 aa).

Over residues 1 to 14 (MSTQLDASQPSNDV) the composition is skewed to polar residues. The disordered stretch occupies residues 1–32 (MSTQLDASQPSNDVASPAAYDPTQKQKSQAKT). Residues Cys78, Cys83, Cys89, Cys104, Cys108, Cys111, and Ser318 each coordinate [4Fe-4S] cluster. The 219-residue stretch at 89 to 307 (CFGKGTATFM…EREAYAMGFS (219 aa)) folds into the Radical SAM core domain.

Belongs to the radical SAM superfamily. Lipoyl synthase family. It depends on [4Fe-4S] cluster as a cofactor.

It localises to the cytoplasm. The catalysed reaction is [[Fe-S] cluster scaffold protein carrying a second [4Fe-4S](2+) cluster] + N(6)-octanoyl-L-lysyl-[protein] + 2 oxidized [2Fe-2S]-[ferredoxin] + 2 S-adenosyl-L-methionine + 4 H(+) = [[Fe-S] cluster scaffold protein] + N(6)-[(R)-dihydrolipoyl]-L-lysyl-[protein] + 4 Fe(3+) + 2 hydrogen sulfide + 2 5'-deoxyadenosine + 2 L-methionine + 2 reduced [2Fe-2S]-[ferredoxin]. It functions in the pathway protein modification; protein lipoylation via endogenous pathway; protein N(6)-(lipoyl)lysine from octanoyl-[acyl-carrier-protein]: step 2/2. Functionally, catalyzes the radical-mediated insertion of two sulfur atoms into the C-6 and C-8 positions of the octanoyl moiety bound to the lipoyl domains of lipoate-dependent enzymes, thereby converting the octanoylated domains into lipoylated derivatives. This Bordetella avium (strain 197N) protein is Lipoyl synthase.